The chain runs to 244 residues: Protein YIPF4 (244 aa).

Topologically, residues 1-113 (MQPPGPPPAY…FNRQVVRDNP (113 aa)) are cytoplasmic. The helical transmembrane segment at 114-134 (DFWGPLAVVLFFSMISLYGQF) threads the bilayer. Residues 135–138 (RVVS) are Extracellular-facing. The chain crosses the membrane as a helical span at residues 139 to 159 (WIITIWIFGSLTIFLLARVLG). Over 160 to 166 (GEVAYGQ) the chain is Cytoplasmic. Residues 167 to 187 (VLGVIGYSLLPLIVIAPVLLV) traverse the membrane as a helical segment. At 188–195 (VGSFEVVS) the chain is on the extracellular side. A helical membrane pass occupies residues 196 to 216 (TLIKLFGVFWAAYSAASLLVG). Residues 217–223 (EEFKTKK) are Cytoplasmic-facing. The helical transmembrane segment at 224 to 244 (PLLIYPIFLLYIYFLSLYTGV) threads the bilayer.

This sequence belongs to the YIP1 family. In terms of assembly, interacts with YIPF3 and YIPF5. As to quaternary structure, (Microbial infection) Interacts with human papillomavirus (HPV) E5 proteins. Expressed in keratinocytes (at protein level).

It localises to the golgi apparatus. Its subcellular location is the cis-Golgi network membrane. Involved in the maintenance of the Golgi structure. The chain is Protein YIPF4 (YIPF4) from Homo sapiens (Human).